A 341-amino-acid chain; its full sequence is Keratin-associated protein 29-1 (341 aa).

7 tandem repeats follow at residues 5–9 (CCPGN), 115–119 (CCQEK), 120–124 (CCDAS), 150–154 (CCDAG), 240–244 (CCVPS), 276–280 (CCKPA), and 307–311 (CCVTG). A 7 X 5 AA repeats of C-C-X(3) region spans residues 5-311 (CCPGNTTAIP…GCKSACCVTG (307 aa)).

This sequence belongs to the KRTAP type 10 family.

The protein is Keratin-associated protein 29-1 (KRTAP29-1) of Homo sapiens (Human).